The following is a 110-amino-acid chain: Large ribosomal subunit protein uL22 (110 aa).

It belongs to the universal ribosomal protein uL22 family. In terms of assembly, part of the 50S ribosomal subunit.

In terms of biological role, this protein binds specifically to 23S rRNA; its binding is stimulated by other ribosomal proteins, e.g. L4, L17, and L20. It is important during the early stages of 50S assembly. It makes multiple contacts with different domains of the 23S rRNA in the assembled 50S subunit and ribosome. Its function is as follows. The globular domain of the protein is located near the polypeptide exit tunnel on the outside of the subunit, while an extended beta-hairpin is found that lines the wall of the exit tunnel in the center of the 70S ribosome. The chain is Large ribosomal subunit protein uL22 from Hahella chejuensis (strain KCTC 2396).